Here is a 1193-residue protein sequence, read N- to C-terminus: Magnesium-chelatase subunit H (1193 aa).

It belongs to the Mg-chelatase subunit H family.

It catalyses the reaction protoporphyrin IX + Mg(2+) + ATP + H2O = Mg-protoporphyrin IX + ADP + phosphate + 3 H(+). It functions in the pathway porphyrin-containing compound metabolism; bacteriochlorophyll biosynthesis (light-independent). Functionally, involved in bacteriochlorophyll pigment biosynthesis; introduces a magnesium ion into protoporphyrin IX to yield Mg-protoroporphyrin IX. The chain is Magnesium-chelatase subunit H (bchH) from Cereibacter sphaeroides (strain ATCC 17023 / DSM 158 / JCM 6121 / CCUG 31486 / LMG 2827 / NBRC 12203 / NCIMB 8253 / ATH 2.4.1.) (Rhodobacter sphaeroides).